The following is an 85-amino-acid chain: Putative membrane protein insertion efficiency factor (85 aa).

The protein belongs to the UPF0161 family.

The protein localises to the cell inner membrane. Could be involved in insertion of integral membrane proteins into the membrane. In Phenylobacterium zucineum (strain HLK1), this protein is Putative membrane protein insertion efficiency factor.